Reading from the N-terminus, the 265-residue chain is Indole-3-glycerol phosphate synthase (265 aa).

This sequence belongs to the TrpC family.

The enzyme catalyses 1-(2-carboxyphenylamino)-1-deoxy-D-ribulose 5-phosphate + H(+) = (1S,2R)-1-C-(indol-3-yl)glycerol 3-phosphate + CO2 + H2O. The protein operates within amino-acid biosynthesis; L-tryptophan biosynthesis; L-tryptophan from chorismate: step 4/5. The polypeptide is Indole-3-glycerol phosphate synthase (Desulforamulus reducens (strain ATCC BAA-1160 / DSM 100696 / MI-1) (Desulfotomaculum reducens)).